Reading from the N-terminus, the 217-residue chain is uncharacterized protein (217 aa).

Residues 26–48 (VFMRGYVVGLVLALMLVTAPAMA) form a helical membrane-spanning segment.

The protein resides in the membrane. This is an uncharacterized protein from Archaeoglobus fulgidus (strain ATCC 49558 / DSM 4304 / JCM 9628 / NBRC 100126 / VC-16).